The sequence spans 338 residues: Heat-inducible transcription repressor HrcA (338 aa).

Belongs to the HrcA family.

Negative regulator of class I heat shock genes (grpE-dnaK-dnaJ and groELS operons). Prevents heat-shock induction of these operons. In Thermotoga maritima (strain ATCC 43589 / DSM 3109 / JCM 10099 / NBRC 100826 / MSB8), this protein is Heat-inducible transcription repressor HrcA.